The chain runs to 415 residues: 3-isopropylmalate dehydratase large subunit (415 aa).

Residues C297, C355, and C358 each coordinate [4Fe-4S] cluster.

The protein belongs to the aconitase/IPM isomerase family. LeuC type 2 subfamily. In terms of assembly, heterodimer of LeuC and LeuD. [4Fe-4S] cluster serves as cofactor.

The enzyme catalyses (2R,3S)-3-isopropylmalate = (2S)-2-isopropylmalate. Its pathway is amino-acid biosynthesis; L-leucine biosynthesis; L-leucine from 3-methyl-2-oxobutanoate: step 2/4. Catalyzes the isomerization between 2-isopropylmalate and 3-isopropylmalate, via the formation of 2-isopropylmaleate. This is 3-isopropylmalate dehydratase large subunit from Sulfurisphaera tokodaii (strain DSM 16993 / JCM 10545 / NBRC 100140 / 7) (Sulfolobus tokodaii).